The following is a 598-amino-acid chain: DNA mismatch repair protein MutL (598 aa).

This sequence belongs to the DNA mismatch repair MutL/HexB family.

Its function is as follows. This protein is involved in the repair of mismatches in DNA. It is required for dam-dependent methyl-directed DNA mismatch repair. May act as a 'molecular matchmaker', a protein that promotes the formation of a stable complex between two or more DNA-binding proteins in an ATP-dependent manner without itself being part of a final effector complex. The sequence is that of DNA mismatch repair protein MutL from Thiobacillus denitrificans (strain ATCC 25259 / T1).